A 327-amino-acid chain; its full sequence is Phenylalanine--tRNA ligase alpha subunit (327 aa).

E252 contributes to the Mg(2+) binding site.

Belongs to the class-II aminoacyl-tRNA synthetase family. Phe-tRNA synthetase alpha subunit type 1 subfamily. As to quaternary structure, tetramer of two alpha and two beta subunits. Mg(2+) is required as a cofactor.

The protein resides in the cytoplasm. It catalyses the reaction tRNA(Phe) + L-phenylalanine + ATP = L-phenylalanyl-tRNA(Phe) + AMP + diphosphate + H(+). The sequence is that of Phenylalanine--tRNA ligase alpha subunit from Pectobacterium atrosepticum (strain SCRI 1043 / ATCC BAA-672) (Erwinia carotovora subsp. atroseptica).